The chain runs to 313 residues: tRNA dimethylallyltransferase (313 aa).

Gly-10–Thr-17 lines the ATP pocket. Thr-12–Thr-17 contacts substrate. Interaction with substrate tRNA stretches follow at residues Asp-35 to Met-38, Gln-159 to Arg-163, and Arg-240 to Arg-245.

The protein belongs to the IPP transferase family. As to quaternary structure, monomer. Mg(2+) is required as a cofactor.

The enzyme catalyses adenosine(37) in tRNA + dimethylallyl diphosphate = N(6)-dimethylallyladenosine(37) in tRNA + diphosphate. Functionally, catalyzes the transfer of a dimethylallyl group onto the adenine at position 37 in tRNAs that read codons beginning with uridine, leading to the formation of N6-(dimethylallyl)adenosine (i(6)A). This is tRNA dimethylallyltransferase from Legionella pneumophila (strain Lens).